We begin with the raw amino-acid sequence, 110 residues long: Large ribosomal subunit protein uL22 (110 aa).

The protein belongs to the universal ribosomal protein uL22 family. Part of the 50S ribosomal subunit.

This protein binds specifically to 23S rRNA; its binding is stimulated by other ribosomal proteins, e.g. L4, L17, and L20. It is important during the early stages of 50S assembly. It makes multiple contacts with different domains of the 23S rRNA in the assembled 50S subunit and ribosome. Functionally, the globular domain of the protein is located near the polypeptide exit tunnel on the outside of the subunit, while an extended beta-hairpin is found that lines the wall of the exit tunnel in the center of the 70S ribosome. The protein is Large ribosomal subunit protein uL22 of Yersinia enterocolitica serotype O:8 / biotype 1B (strain NCTC 13174 / 8081).